We begin with the raw amino-acid sequence, 396 residues long: MKEEIPPRSPILDEQPSTPLEHQETSQSVDCKICGDRASGFHYGVHACEGCKGFFRRTIRMRLQYEHCDRNCKIQKKNRNKCQYCRFNKCLSLGMSHNAIRFGRMPESEKRKLVQAPVSDSAAPDSPVSDLDVLSQLIHSSYMNTFTMTKKRARDILTGRNSISPFVIHDMDTLWQAEQGTVWEQLPTQNLTGTEIGVHVFYRCQCTSVETVRALTDFAKRIPGFGTLYLNDQVTLLKYGVHEAIFCMLASLMNKDGLLVAGGRGFVTREFLRSLRQPFCHIMEPKFHFASKFNALELNDSDLALFVASIILCGDRPGLINPSQVEDIQEGILGALRRHLKASHTDAPFLFPKLLHKMADLRQLVTEHAELVQSIKRTESSAALHPLLQEIYRDMY.

The tract at residues 1–24 (MKEEIPPRSPILDEQPSTPLEHQE) is disordered. The segment covering 15–24 (QPSTPLEHQE) has biased composition (polar residues). A DNA-binding region (nuclear receptor) is located at residues 28–102 (SVDCKICGDR…LGMSHNAIRF (75 aa)). NR C4-type zinc fingers lie at residues 31 to 51 (CKICGDRASGFHYGVHACEGC) and 68 to 90 (CDRNCKIQKKNRNKCQYCRFNKC). In terms of domain architecture, NR LBD spans 166–394 (FVIHDMDTLW…HPLLQEIYRD (229 aa)).

The protein belongs to the nuclear hormone receptor family. NR1 subfamily. Heterodimer with the retinoid X receptor. 'Lys-48'-linked polyubiquitinated; leading to proteasomal degradation. Deubiquitinated and stabilized by OTUD3. Ubiquitous.

The protein resides in the nucleus. Ligand-activated transcription factor key mediator of energy metabolism in adipose tissues. Receptor that binds peroxisome proliferators such as hypolipidemic drugs and fatty acids. Has a preference for poly-unsaturated fatty acids, such as gamma-linoleic acid and eicosapentanoic acid. Once activated by a ligand, the receptor binds to promoter elements of target genes. Regulates the peroxisomal beta-oxidation pathway of fatty acids. Functions as a transcription activator for the acyl-CoA oxidase gene. Decreases expression of NPC1L1 once activated by a ligand. This chain is Peroxisome proliferator-activated receptor delta (ppard), found in Xenopus laevis (African clawed frog).